Here is a 353-residue protein sequence, read N- to C-terminus: Thiamine-phosphate synthase (353 aa).

The tract at residues M1–A128 is unknown. The thiamine-phosphate synthase stretch occupies residues L129–T353. Residues Q185–K189 and N217 each bind 4-amino-2-methyl-5-(diphosphooxymethyl)pyrimidine. Mg(2+) is bound by residues D218 and D237. S256 serves as a coordination point for 4-amino-2-methyl-5-(diphosphooxymethyl)pyrimidine. Position 282–284 (T282–T284) interacts with 2-[(2R,5Z)-2-carboxy-4-methylthiazol-5(2H)-ylidene]ethyl phosphate. Residue K285 participates in 4-amino-2-methyl-5-(diphosphooxymethyl)pyrimidine binding. Residues G312 and V332–S333 contribute to the 2-[(2R,5Z)-2-carboxy-4-methylthiazol-5(2H)-ylidene]ethyl phosphate site.

This sequence belongs to the thiamine-phosphate synthase family. The cofactor is Mg(2+).

The enzyme catalyses 2-[(2R,5Z)-2-carboxy-4-methylthiazol-5(2H)-ylidene]ethyl phosphate + 4-amino-2-methyl-5-(diphosphooxymethyl)pyrimidine + 2 H(+) = thiamine phosphate + CO2 + diphosphate. It catalyses the reaction 2-(2-carboxy-4-methylthiazol-5-yl)ethyl phosphate + 4-amino-2-methyl-5-(diphosphooxymethyl)pyrimidine + 2 H(+) = thiamine phosphate + CO2 + diphosphate. The catalysed reaction is 4-methyl-5-(2-phosphooxyethyl)-thiazole + 4-amino-2-methyl-5-(diphosphooxymethyl)pyrimidine + H(+) = thiamine phosphate + diphosphate. It functions in the pathway cofactor biosynthesis; thiamine diphosphate biosynthesis; thiamine phosphate from 4-amino-2-methyl-5-diphosphomethylpyrimidine and 4-methyl-5-(2-phosphoethyl)-thiazole: step 1/1. Condenses 4-methyl-5-(beta-hydroxyethyl)thiazole monophosphate (THZ-P) and 2-methyl-4-amino-5-hydroxymethyl pyrimidine pyrophosphate (HMP-PP) to form thiamine monophosphate (TMP). This chain is Thiamine-phosphate synthase, found in Synechococcus sp. (strain WH7803).